Here is a 60-residue protein sequence, read N- to C-terminus: Large ribosomal subunit protein uL30 (60 aa).

This sequence belongs to the universal ribosomal protein uL30 family. In terms of assembly, part of the 50S ribosomal subunit.

This chain is Large ribosomal subunit protein uL30, found in Mycobacteroides abscessus (strain ATCC 19977 / DSM 44196 / CCUG 20993 / CIP 104536 / JCM 13569 / NCTC 13031 / TMC 1543 / L948) (Mycobacterium abscessus).